The following is a 529-amino-acid chain: ATP synthase F(1) complex catalytic subunit beta, mitochondrial (529 aa).

The N-terminal 46 residues, 1–46 (MLSLVGRVASASASGALRGLNPLAALPQAHLLLRTAPAGVHPARDY), are a transit peptide targeting the mitochondrion. Residue Ser-106 is glycosylated (O-linked (GlcNAc) serine). N6-acetyllysine; alternate occurs at positions 124, 133, and 161. N6-succinyllysine; alternate is present on residues Lys-124, Lys-133, and Lys-161. N6-acetyllysine is present on Lys-198. ADP-binding residues include Gly-209, Val-210, Gly-211, Lys-212, Thr-213, and Val-214. ATP is bound at residue Gly-209. Residues Gly-209, Val-210, Gly-211, Lys-212, and Thr-213 each coordinate phosphate. Residues Gly-211, Lys-212, Thr-213, and Val-214 each coordinate ATP. Thr-213 contacts Mg(2+). A Mg(2+)-binding site is contributed by Glu-238. Arg-239 is a binding site for ATP. Lys-259 and Lys-264 each carry N6-acetyllysine; alternate. Residues Lys-259 and Lys-264 each carry the N6-succinyllysine; alternate modification. The residue at position 312 (Thr-312) is a Phosphothreonine. Residue Ser-415 is modified to Phosphoserine. Lys-426 carries the post-translational modification N6-acetyllysine. Residue Ser-433 is modified to Phosphoserine. Residues Lys-480 and Lys-485 each carry the N6-acetyllysine modification. At Lys-522 the chain carries N6-acetyllysine; alternate. The residue at position 522 (Lys-522) is an N6-succinyllysine; alternate. The residue at position 529 (Ser-529) is a Phosphoserine.

Belongs to the ATPase alpha/beta chains family. Homotrimer. Component of the ATP synthase complex composed at least of ATP5F1A/subunit alpha, ATP5F1B/subunit beta, ATP5MC1/subunit c (homooctomer), MT-ATP6/subunit a, MT-ATP8/subunit 8, ATP5ME/subunit e, ATP5MF/subunit f, ATP5MG/subunit g, ATP5MK/subunit k, ATP5MJ/subunit j, ATP5F1C/subunit gamma, ATP5F1D/subunit delta, ATP5F1E/subunit epsilon, ATP5PF/subunit F6, ATP5PB/subunit b, ATP5PD/subunit d, ATP5PO/subunit OSCP. ATP synthase complex consists of a soluble F(1) head domain (subunits alpha(3) and beta(3)) - the catalytic core - and a membrane F(0) domain - the membrane proton channel (subunits c, a, 8, e, f, g, k and j). These two domains are linked by a central stalk (subunits gamma, delta, and epsilon) rotating inside the F1 region and a stationary peripheral stalk (subunits F6, b, d, and OSCP). Interacts with PPIF. Interacts with BCL2L1 isoform BCL-X(L); the interaction mediates the association of BCL2L1 isoform BCL-X(L) with the mitochondrial membrane F(1)F(0) ATP synthase and enhances neurons metabolic efficiency. Interacts with CLN5 and PPT1. Interacts with S100A1; this interaction increases F1-ATPase activity. Interacts with MTLN. Interacts with TTC5/STRAP; the interaction results in decreased mitochondrial ATP production.

The protein localises to the mitochondrion inner membrane. The enzyme catalyses ATP + H2O + 4 H(+)(in) = ADP + phosphate + 5 H(+)(out). Its function is as follows. Catalytic subunit beta, of the soluble F(1) head domain within the mitochondrial ATP synthase complex (F(1)F(0) ATP synthase or complex V) that produces ATP from ADP and phosphate inorganique in the presence of a proton gradient across the membrane which is generated by electron transport complexes of the respiratory chain. With the non-catalytic subunit alpha (ATP5F1A), forms the catalytic core in the F(1) domain. ATP synthase complex consist of two structural domains, F(1) - containing the extramembraneous catalytic core, and F(0) - containing the membrane proton channel, linked together by a central stalk and a peripheral stalk. During catalysis, ATP synthesis in the catalytic domain of F(1) is coupled via a rotary mechanism of the central stalk subunits to proton translocation. In terms of biological role, catalytic subunit beta, of the mitochondrial membrane ATP synthase complex (F(1)F(0) ATP synthase or Complex V) that produces ATP from ADP in the presence of a proton gradient across the membrane which is generated by electron transport complexes of the respiratory chain. ATP synthase complex consist of a soluble F(1) head domain - the catalytic core - and a membrane F(1) domain - the membrane proton channel. These two domains are linked by a central stalk rotating inside the F(1) region and a stationary peripheral stalk. During catalysis, ATP synthesis in the catalytic domain of F(1) is coupled via a rotary mechanism of the central stalk subunits to proton translocation. In vivo, can only synthesize ATP although its ATP hydrolase activity can be activated artificially in vitro. With the subunit alpha (ATP5F1A), forms the catalytic core in the F(1) domain. This chain is ATP synthase F(1) complex catalytic subunit beta, mitochondrial, found in Rattus norvegicus (Rat).